The following is a 377-amino-acid chain: Nitric oxide reductase FlRd-NAD(+) reductase (377 aa).

The protein belongs to the FAD-dependent oxidoreductase family. Requires FAD as cofactor.

The protein resides in the cytoplasm. The catalysed reaction is 2 reduced [nitric oxide reductase rubredoxin domain] + NAD(+) + H(+) = 2 oxidized [nitric oxide reductase rubredoxin domain] + NADH. It functions in the pathway nitrogen metabolism; nitric oxide reduction. Its function is as follows. One of at least two accessory proteins for anaerobic nitric oxide (NO) reductase. Reduces the rubredoxin moiety of NO reductase. This chain is Nitric oxide reductase FlRd-NAD(+) reductase, found in Shigella flexneri serotype 5b (strain 8401).